We begin with the raw amino-acid sequence, 525 residues long: Cytochrome P450 monooxygenase tpcC (525 aa).

A helical membrane pass occupies residues 13–33 (LPVTLVSLLVGSIFYFCYLTV). Cys457 contacts heme.

It belongs to the cytochrome P450 family. Requires heme as cofactor.

It is found in the membrane. It participates in secondary metabolite biosynthesis; terpenoid biosynthesis. Cytochrome P450 monooxygenase; part of the gene cluster that mediates the biosynthesis of terpestacin. The bifunctional terpene synthase tpcA converts isopentenyl diphosphate (IPP) and dimethylallyl diphosphate (DMAPP) into the sesterterpene preterpestacin I. The C-terminal prenyltransferase (PT) domain of tpcA catalyzes formation of GFPP, whereas the N-terminal terpene cyclase (TC) domain catalyzes the cyclization of GFPP into preterpestacin I. The cytochrome P450 monooxygenase tpcB then hydroxylates preterpestacin I to yield 24-hydroxypreterpstacin I (renamed as preterpestacin II) whereas the cytochrome P450 monooxygenase tpcC further hydroxylates preterpestacin II to yield 16,17-dihydroxypreterpestacin II (renamed as preterpestacin III). Finally, the FAD-dependent monooxygenase tpcD converts preterpestacin III into terpestacin. The sequence is that of Cytochrome P450 monooxygenase tpcC from Cochliobolus heterostrophus (strain C5 / ATCC 48332 / race O) (Southern corn leaf blight fungus).